The sequence spans 70 residues: Protein SlyX homolog (70 aa).

The disordered stretch occupies residues 51–70 (RMREAEANRPGPTNEPPPHY).

It belongs to the SlyX family.

The chain is Protein SlyX homolog from Nitrobacter hamburgensis (strain DSM 10229 / NCIMB 13809 / X14).